We begin with the raw amino-acid sequence, 525 residues long: Protein shisa-6 (525 aa).

Residues 1–30 (MALRRLLLPPLLLSLLLSLASLHLPPGADA) form the signal peptide. Residues 31-180 (ARGRSGNRTL…NKYDPEKDKT (150 aa)) lie on the Extracellular side of the membrane. N-linked (GlcNAc...) asparagine glycosylation is found at asparagine 37 and asparagine 62. Residues 181–201 (NFTVYITCGVIAFVIVAGVFA) traverse the membrane as a helical segment. Residues 202-525 (KVSYDKAHRP…YTASKTEVTV (324 aa)) lie on the Cytoplasmic side of the membrane. Positions 241-294 (ISAIDTSPKENTPVRSTSKNHYTPVRTAKQTPGDRQYNHPILSSATQTPTHEKP) are disordered. Residues 243–261 (AIDTSPKENTPVRSTSKNH) show a composition bias toward polar residues. Serine 416, serine 422, and serine 434 each carry phosphoserine. Position 458 is a phosphothreonine (threonine 458). Residues 469–495 (MHSHPSASNNSYATLGQSQTAAKRHAF) form a disordered region. Positions 473–489 (PSASNNSYATLGQSQTA) are enriched in polar residues. The residue at position 502 (threonine 502) is a Phosphothreonine. A PDZ-binding motif is present at residues 522-525 (EVTV).

Belongs to the shisa family. Component of the postsynaptic hippocampal AMPA-type glutamate receptor (AMPAR) complex, at least composed of pore forming AMPAR subunits GRIA1, GRIA2 and GRIA3 and AMPAR auxiliary proteins SHISA6 and SHISA7. Interacts (via PDZ-binding motif) with DLG4/PSD-95 (via PDZ domain); the interaction is direct. Post-translationally, N-glycosylated. As to expression, highly expressed in cerebellum and hippocampal neurons: CA1 stratum oriens and stratum radiatum, CA3 stratum oriens and stratum lucidum, and the dentate gyrus polymorphic layer. Expressed in other brain structures including olfactory bulb, cortex, amygdala and midbrain (at protein level). Also expressed in a subset of spermatogonial stem cells. Also expressed in eye, heart, kidney, lung, muscle and spleen. Isoform 2: Specifically expressed in hippocampus.

It localises to the postsynaptic density membrane. Involved in maintenance of high-frequency synaptic transmission at hippocampal CA3-CA1 synapses. Regulates AMPA-type glutamate receptor (AMPAR) immobilization at postsynaptic density keeping the channels in an activated state in the presence of glutamate and preventing synaptic depression. May play a role in self-renewal and differentiation of spermatogonial stem cells by inhibiting canonical Wnt signaling pathway. This chain is Protein shisa-6, found in Mus musculus (Mouse).